The sequence spans 269 residues: NAD kinase (269 aa).

Residue D62 is the Proton acceptor of the active site. NAD(+) is bound by residues 62–63, 130–131, K141, R158, D160, 171–176, A195, and Q229; these read DG, NE, and TAYAMS.

Belongs to the NAD kinase family. The cofactor is a divalent metal cation.

The protein resides in the cytoplasm. It carries out the reaction NAD(+) + ATP = ADP + NADP(+) + H(+). Its function is as follows. Involved in the regulation of the intracellular balance of NAD and NADP, and is a key enzyme in the biosynthesis of NADP. Catalyzes specifically the phosphorylation on 2'-hydroxyl of the adenosine moiety of NAD to yield NADP. The sequence is that of NAD kinase from Methanospirillum hungatei JF-1 (strain ATCC 27890 / DSM 864 / NBRC 100397 / JF-1).